The primary structure comprises 25 residues: Ocellatin-L2 (25 aa).

Leu25 is subject to Leucine amide.

The protein belongs to the frog skin active peptide (FSAP) family. Ocellatin subfamily. In terms of tissue distribution, expressed by the skin glands.

It localises to the secreted. Its function is as follows. Shows a low activity in stimulating insulin release from rat BRIN-BD11 beta cells, and acts without loss of integrity of the plasma membrane. Does not show antibacterial (E.coli and S.aureus). Does not show hemolytic activity against human erythrocytes. The polypeptide is Ocellatin-L2 (Leptodactylus laticeps (Santa Fe frog)).